Here is a 1032-residue protein sequence, read N- to C-terminus: Argonaute protein hrde-1 (1032 aa).

Disordered regions lie at residues 1 to 51 (MADL…PIGR) and 298 to 375 (KLSE…YSPS). Residues 1 to 551 (MADLLDKIMG…IQMTAKLLPP (551 aa)) are required to recruit the small-RNA amplification machinery to gene targets and promote gene silencing. Residues 18 to 33 (PKRDNRMNQDKDEPTS) show a composition bias toward basic and acidic residues. Residues 303–313 (KGGGGGRGGYG) show a composition bias toward gly residues. Basic and acidic residues-rich tracts occupy residues 315-335 (SDSRDSRGGYRGGRSDSRDFR) and 343-364 (GNDRYRDESRGRRDMYDSRRDS). The region spanning 376-481 (DAAELEHAFG…FPMELLRIAP (106 aa)) is the PAZ domain. Positions 650–977 (DILVGIAREK…LAKRGRNNYK (328 aa)) constitute a Piwi domain.

Belongs to the argonaute family. WAGO subfamily. In terms of tissue distribution, expressed in the nuclei of male and female germ cells.

Its subcellular location is the cytoplasm. The protein resides in the cytoplasmic ribonucleoprotein granule. It localises to the nucleus. Argonaute protein which is involved in the endogenous small interfering RNA (endo-siRNA) pathway and is required for RNA-mediated gene silencing (RNAi) in the germline. Interacts with secondary 22G-RNAs in an hrde-2-dependent manner; 22G-RNAs are RNA-dependent RNA polymerase-derived endo-siRNAs, typically 22 nucleotides in length with a 5'-guanosine residue. Plays a key role in transgenerational epigenetic inheritance and germline immortality. May be involved in transgenerational gene silencing both by inducing subnuclear-co-localization of target genes into heterochromatin and by activation of small RNA amplification in the nuage. This is Argonaute protein hrde-1 from Caenorhabditis elegans.